The sequence spans 747 residues: Beta-glucosidase BoGH3A (747 aa).

The first 26 residues, 1-26 (MIIGIMKTFLLTICFLSVQTGMVAIA), serve as a signal peptide directing secretion. The active site involves Asp-273.

Belongs to the glycosyl hydrolase 3 family.

It localises to the periplasm. The enzyme catalyses Hydrolysis of terminal, non-reducing beta-D-glucosyl residues with release of beta-D-glucose.. It functions in the pathway glucan metabolism; xyloglucan degradation. Catalyzes the hydrolysis of terminal, non-reducing beta-D-glucosyl residues with release of beta-D-glucose in xyloglucan degradation, leading to remove the backbone 'G' units. This is Beta-glucosidase BoGH3A from Bacteroides ovatus (strain ATCC 8483 / DSM 1896 / JCM 5824 / BCRC 10623 / CCUG 4943 / NCTC 11153).